We begin with the raw amino-acid sequence, 224 residues long: Pre-hexon-linking protein VIII (224 aa).

A Phosphothreonine; by host modification is found at threonine 64. The propeptide occupies 112 to 154 (RQLCPSQIGIKSPVLAGTGIQLSEDIPSASWIRPDGIFQLGGG).

This sequence belongs to the adenoviridae hexon-linking protein family. In terms of assembly, interacts with the peripentonal hexons as well as the hexons in the facets. Part of a complex composed of the core-capsid bridging protein, the endosome lysis protein VI and the hexon-linking protein VIII; these interactions bridge the virus core to the capsid. Post-translationally, cleaved by the viral protease during virion maturation. May cause the middle segment to be shed from the capsid.

Its subcellular location is the virion. It localises to the host nucleus. In terms of biological role, structural component of the virion that acts as a cement protein on the capsid interior and which glue the peripentonal hexons and group-of-nine hexons together. The chain is Pre-hexon-linking protein VIII from Canis lupus familiaris (Dog).